Reading from the N-terminus, the 291-residue chain is Pca regulon regulatory protein (291 aa).

Residues 1-22 are disordered; it reads MSDETLVNDPVNPEPARPASAA. The 61-residue stretch at 45 to 105 folds into the HTH iclR-type domain; the sequence is MTSLARGLAV…SDGRTYSLLP (61 aa). A DNA-binding region (H-T-H motif) is located at residues 67-86; that stretch reads IAQISHRTEIPRAAVRRCLH. One can recognise an IclR-ED domain in the interval 120–291; that stretch reads LAISAQPYLD…SRDLCHQLFG (172 aa).

Positive regulator of all genes within the pca regulon, pcaBDC, pcaIJ and pcaF. Also required for the chemotactic response to aromatic compounds. The polypeptide is Pca regulon regulatory protein (pcaR) (Pseudomonas putida (Arthrobacter siderocapsulatus)).